A 91-amino-acid polypeptide reads, in one-letter code: Cell division topological specificity factor (91 aa).

The protein belongs to the MinE family.

Its function is as follows. Prevents the cell division inhibition by proteins MinC and MinD at internal division sites while permitting inhibition at polar sites. This ensures cell division at the proper site by restricting the formation of a division septum at the midpoint of the long axis of the cell. The chain is Cell division topological specificity factor from Chloroflexus aurantiacus (strain ATCC 29366 / DSM 635 / J-10-fl).